The sequence spans 485 residues: Glutamate--tRNA ligase (485 aa).

The 'HIGH' region signature appears at 11–21; that stretch reads PSPTGHLHIGN. The 'KMSKS' region signature appears at 252-256; it reads KLSKR. An ATP-binding site is contributed by lysine 255.

It belongs to the class-I aminoacyl-tRNA synthetase family. Glutamate--tRNA ligase type 1 subfamily. As to quaternary structure, monomer.

It is found in the cytoplasm. The catalysed reaction is tRNA(Glu) + L-glutamate + ATP = L-glutamyl-tRNA(Glu) + AMP + diphosphate. Catalyzes the attachment of glutamate to tRNA(Glu) in a two-step reaction: glutamate is first activated by ATP to form Glu-AMP and then transferred to the acceptor end of tRNA(Glu). In Bacillus cereus (strain ATCC 14579 / DSM 31 / CCUG 7414 / JCM 2152 / NBRC 15305 / NCIMB 9373 / NCTC 2599 / NRRL B-3711), this protein is Glutamate--tRNA ligase.